Reading from the N-terminus, the 309-residue chain is Cytochrome c biogenesis protein CcsA (309 aa).

8 helical membrane-spanning segments follow: residues 18–38, 43–63, 73–93, 102–122, 148–168, 216–236, 250–267, and 279–299; these read LGLLVFYFLLINLPISLGAVF, SFAVRLITILVNLLITLQLLF, ISNLYESLYFLAWGITLGQLL, IIPSIAIPIELLIVSFACFVL, VMLSYAALIIGSLLSMSVLFI, SILIGFVLLTLGLISGAVWAN, TWAFISWLFYAAYLHMRI, and LASTGFLVVLVCYLGVNFLGI.

Belongs to the CcmF/CycK/Ccl1/NrfE/CcsA family. As to quaternary structure, may interact with ccs1.

The protein localises to the cellular thylakoid membrane. Functionally, required during biogenesis of c-type cytochromes (cytochrome c6 and cytochrome f) at the step of heme attachment. This is Cytochrome c biogenesis protein CcsA from Prochlorococcus marinus (strain MIT 9301).